Here is a 370-residue protein sequence, read N- to C-terminus: Lysophosphatidic acid receptor 4 (370 aa).

Residues 1–43 lie on the Extracellular side of the membrane; that stretch reads MGDRRFIDFQFQDSNSSLRPRLGNATANNTCIVDDSFKYNLNG. N-linked (GlcNAc...) asparagine glycans are attached at residues N15, N24, and N28. Residues 44-64 traverse the membrane as a helical segment; the sequence is AVYSVVFILGLITNSVSLFVF. Residues 65 to 73 lie on the Cytoplasmic side of the membrane; sequence CFRMKMRSE. The helical transmembrane segment at 74–94 threads the bilayer; it reads TAIFITNLAVSDLLFVCTLPF. Over 95–112 the chain is Extracellular; that stretch reads KIFYNFNRHWPFGDTLCK. C111 and C188 are joined by a disulfide. A helical transmembrane segment spans residues 113-133; sequence ISGTAFLTNIYGSMLFLTCIS. Residues 134 to 155 are Cytoplasmic-facing; it reads VDRFLAIVYPFRSRTIRTRRNS. A helical transmembrane segment spans residues 156–176; sequence AIVCAGVWILVLSGGISASLF. Over 177–203 the chain is Extracellular; sequence STTNVNNATTTCFEGFSKRVWKTYLSK. N-linked (GlcNAc...) asparagine glycosylation is present at N183. Residues 204–224 traverse the membrane as a helical segment; sequence ITIFIEVVGFIIPLILNVSCS. Residues 225–254 are Cytoplasmic-facing; sequence SVVLRTLRKPATLSQIGTNKKKVLKMITVH. A helical transmembrane segment spans residues 255-275; it reads MAVFVVCFVPYNSVLFLYALV. At 276-294 the chain is on the extracellular side; it reads RSQAITNCFLERFAKIMYP. Residues 295 to 315 form a helical membrane-spanning segment; the sequence is ITLCLATLNCCFDPFIYYFTL. The Cytoplasmic segment spans residues 316–370; sequence ESFQKSFYINAHIRMESLFKTETPLTTKPSLPAIQEEVSDQTTNNGGELMLESTF.

Belongs to the G-protein coupled receptor 1 family. As to expression, high expression in ovary. Not detected in the brain regions thalamus, putamen, caudate, frontal cortex, pons, hypothalamus and hippocampus.

Its subcellular location is the cell membrane. Receptor for lysophosphatidic acid (LPA), a mediator of diverse cellular activities. Transduces a signal by increasing the intracellular calcium ions and by stimulating adenylyl cyclase activity. The rank order of potency for agonists of this receptor is 1-oleoyl- &gt; 1-stearoyl- &gt; 1-palmitoyl- &gt; 1-myristoyl- &gt; 1-alkyl- &gt; 1-alkenyl-LPA. The sequence is that of Lysophosphatidic acid receptor 4 (LPAR4) from Homo sapiens (Human).